Reading from the N-terminus, the 323-residue chain is Ankyrin repeat and SOCS box protein 11 (323 aa).

6 ANK repeats span residues alanine 64–leucine 93, asparagine 97–glycine 126, histidine 130–leucine 159, histidine 162–glutamine 191, histidine 195–histidine 224, and tryptophan 227–cysteine 256. One can recognise an SOCS box domain in the interval serine 273–glutamine 323.

This sequence belongs to the ankyrin SOCS box (ASB) family. In terms of assembly, substrate-recognition component of the ECS(ASB11) complex, composed of ASB11, CUL5, ELOB, ELOC and RNF7/RBX2.

It localises to the endoplasmic reticulum. It functions in the pathway protein modification; protein ubiquitination. Functionally, substrate-recognition component of a cullin-5-RING E3 ubiquitin-protein ligase complex (ECS complex, also named CRL5 complex), which mediates the ubiquitination and subsequent proteasomal degradation of target proteins, such as BIK, DIRAS2 and RPN1. The ECS(ASB11) complex acts as a regulator of the endoplasmic reticulum unfolded protein response by mediating ubiquitination and degradation of BIK. In Bos taurus (Bovine), this protein is Ankyrin repeat and SOCS box protein 11 (ASB11).